Here is a 578-residue protein sequence, read N- to C-terminus: Polypeptide N-acetylgalactosaminyltransferase 4 (578 aa).

The Cytoplasmic segment spans residues 1-12 (MAVRWTWAGKSC). The helical; Signal-anchor for type II membrane protein transmembrane segment at 13 to 35 (LLLALLTLAYILVEFSVSTLYAS) threads the bilayer. Residues 36-578 (PGAGGARELG…DKNQLWRFEK (543 aa)) lie on the Lumenal side of the membrane. 5 disulfide bridges follow: cysteine 124–cysteine 357, cysteine 348–cysteine 421, cysteine 457–cysteine 477, cysteine 503–cysteine 518, and cysteine 547–cysteine 565. A catalytic subdomain A region spans residues 134–243 (LPTTSVIIAF…TGWLEPLLER (110 aa)). Residues aspartate 175 and arginine 204 each coordinate substrate. Mn(2+) is bound by residues aspartate 227 and histidine 229. The tract at residues 303–365 (PIRSPTMAGG…PCSHVGHVFP (63 aa)) is catalytic subdomain B. Tryptophan 334 contacts substrate. Histidine 362 contributes to the Mn(2+) binding site. A substrate-binding site is contributed by tyrosine 370. The Ricin B-type lectin domain occupies 444–577 (WHGAIRSMGI…LDKNQLWRFE (134 aa)). Asparagine 471 carries an N-linked (GlcNAc...) asparagine glycan.

The protein belongs to the glycosyltransferase 2 family. GalNAc-T subfamily. Mn(2+) serves as cofactor. As to expression, highly expressed in sublingual gland, stomach, colon, small intestine and cervix. Expressed at intermediate levels in kidney, ovary, lung and uterus. Weakly expressed in spleen, liver, heart and brain. Not expressed in submandibular and parotid glands, skeletal muscle and testis.

It is found in the golgi apparatus membrane. The enzyme catalyses L-seryl-[protein] + UDP-N-acetyl-alpha-D-galactosamine = a 3-O-[N-acetyl-alpha-D-galactosaminyl]-L-seryl-[protein] + UDP + H(+). It catalyses the reaction L-threonyl-[protein] + UDP-N-acetyl-alpha-D-galactosamine = a 3-O-[N-acetyl-alpha-D-galactosaminyl]-L-threonyl-[protein] + UDP + H(+). It participates in protein modification; protein glycosylation. Catalyzes the initial reaction in O-linked oligosaccharide biosynthesis, the transfer of an N-acetyl-D-galactosamine residue to a serine or threonine residue on the protein receptor. Has a highest activity toward EA2 peptide substrate and a much lower activity with EPO-T, Muc2, Muc1a, Muc1b. The chain is Polypeptide N-acetylgalactosaminyltransferase 4 (Galnt4) from Mus musculus (Mouse).